We begin with the raw amino-acid sequence, 359 residues long: Putative B3 domain-containing protein At3g24850 (359 aa).

Disordered stretches follow at residues Asp92–Ser111 and Glu159–Gly192. Residues Thr100–Ser111 are compositionally biased toward polar residues. The TF-B3 DNA-binding region spans Phe250–Ser351.

Its subcellular location is the nucleus. The chain is Putative B3 domain-containing protein At3g24850 from Arabidopsis thaliana (Mouse-ear cress).